We begin with the raw amino-acid sequence, 342 residues long: Cyclin-D3-1 (342 aa).

Over residues 322–334 the composition is skewed to polar residues; that stretch reads VGSPATNYESSAS. The interval 322–342 is disordered; sequence VGSPATNYESSASSKRRRICR.

It belongs to the cyclin family. Cyclin D subfamily.

The sequence is that of Cyclin-D3-1 (CYCD3-1) from Oryza sativa subsp. japonica (Rice).